Reading from the N-terminus, the 159-residue chain is Ribosomal RNA large subunit methyltransferase H (159 aa).

S-adenosyl-L-methionine contacts are provided by residues Gly-108 and Phe-127–Met-132.

Belongs to the RNA methyltransferase RlmH family. Homodimer.

The protein resides in the cytoplasm. It carries out the reaction pseudouridine(1915) in 23S rRNA + S-adenosyl-L-methionine = N(3)-methylpseudouridine(1915) in 23S rRNA + S-adenosyl-L-homocysteine + H(+). In terms of biological role, specifically methylates the pseudouridine at position 1915 (m3Psi1915) in 23S rRNA. The polypeptide is Ribosomal RNA large subunit methyltransferase H (Lactobacillus acidophilus (strain ATCC 700396 / NCK56 / N2 / NCFM)).